The sequence spans 386 residues: Protein MGF 360-4L (386 aa).

The protein belongs to the asfivirus MGF 360 family.

Its function is as follows. Plays a role in virus cell tropism, and may be required for efficient virus replication in macrophages. The protein is Protein MGF 360-4L of African swine fever virus (isolate Warthog/Namibia/Wart80/1980) (ASFV).